The primary structure comprises 303 residues: Probable cell division protein WhiA (303 aa).

A DNA-binding region (H-T-H motif) is located at residues 272-303 (SIQQIADSIEPPLTKSGVNHRLRKINKIADDL).

This sequence belongs to the WhiA family.

Its function is as follows. Involved in cell division and chromosome segregation. This chain is Probable cell division protein WhiA, found in Streptococcus thermophilus (strain ATCC BAA-250 / LMG 18311).